The following is a 314-amino-acid chain: Deoxyhypusine hydroxylase (314 aa).

At Met-1 the chain carries N-acetylmethionine. HEAT-like PBS-type repeat units follow at residues 61 to 87 (LAHE…VLND), 94 to 120 (VRHE…SLSS), 188 to 214 (ERYA…SLSA), 219 to 245 (LRHE…VLRD), and 252 to 278 (VRHE…FSKD). Fe cation is bound by residues His-63, Glu-64, His-96, and Glu-97. Fe cation-binding residues include His-221, Glu-222, His-254, and Glu-255.

It belongs to the deoxyhypusine hydroxylase family. Fe(2+) is required as a cofactor.

The catalysed reaction is [eIF5A protein]-deoxyhypusine + AH2 + O2 = [eIF5A protein]-hypusine + A + H2O. Its pathway is protein modification; eIF5A hypusination. Functionally, catalyzes the hydroxylation of the N(6)-(4-aminobutyl)-L-lysine intermediate to form hypusine, an essential post-translational modification only found in mature eIF-5A factor. This chain is Deoxyhypusine hydroxylase, found in Arabidopsis thaliana (Mouse-ear cress).